The following is a 382-amino-acid chain: MDFGLALLLAGLLGLLLGQSLQVKPLQVEPPEPVVAVALGASRQLTCRLACADRGASVQWRGLDTSLGAVQSDTGRSVLTVRNASLSAAGTRVCVGSCGGRTFQHTVQLLVYAFPDQLTVSPAALVPGDPEVACTAHKVTPVDPNALSFSLLVGGQELEGAQALGPEVQEEEEEPQGDEDVLFRVTERWRLPPLGTPVPPALYCQATMRLPGLELSHRQAIPVLHSPTSPEPPDTTSPESPDTTSPESPDTTSQEPPDTTSPEPPDKTSPEPAPQQGSTHTPRSPGSTRTRRPEISQAGPTQGEVIPTGSSKPAGDQLPAALWTSSAVLGLLLLALPTYHLWKRCRHLAEDDTHPPASLRLLPQVSAWAGLRGTGQVGISPS.

An N-terminal signal peptide occupies residues 1–18 (MDFGLALLLAGLLGLLLG). Residues 19–317 (QSLQVKPLQV…TGSSKPAGDQ (299 aa)) are Extracellular-facing. 2 consecutive Ig-like domains span residues 23-112 (VKPL…LLVY) and 113-231 (AFPD…TSPE). Disulfide bonds link Cys47-Cys94, Cys51-Cys98, and Cys134-Cys204. Asn83 carries N-linked (GlcNAc...) asparagine glycosylation. Positions 223-314 (VLHSPTSPEP…VIPTGSSKPA (92 aa)) are disordered. Positions 226-317 (SPTSPEPPDT…TGSSKPAGDQ (92 aa)) are mucin-like. The stretch at 228–231 (TSPE) is one 1; truncated repeat. Residues 228–271 (TSPEPPDTTSPESPDTTSPESPDTTSQEPPDTTSPEPPDKTSPE) form a 5.5 X 8 AA tandem repeats of [PS]-P-D-T-T-S-[QP]-E region. Repeat copies occupy residues 232 to 239 (PPDTTSPE), 240 to 247 (SPDTTSPE), 248 to 255 (SPDTTSQE), 256 to 263 (PPDTTSPE), and 264 to 271 (PPDKTSPE). Over residues 236–261 (TSPESPDTTSPESPDTTSQEPPDTTS) the composition is skewed to low complexity. Positions 277–288 (GSTHTPRSPGST) are enriched in low complexity. A helical transmembrane segment spans residues 318 to 338 (LPAALWTSSAVLGLLLLALPT). At 339–382 (YHLWKRCRHLAEDDTHPPASLRLLPQVSAWAGLRGTGQVGISPS) the chain is on the cytoplasmic side.

Homodimer. Post-translationally, the Ser/Thr-rich mucin-like domain may provide possible sites for O-glycosylation. As to expression, highly expressed on high endothelial venules (HEV) and lamina propia venules found in the small intestine, and to a lesser extent in the colon and spleen. Very low levels of expression found in pancreas and brain. Not expressed in the thymus, prostate, ovaries, testis, heart, placenta, lung, liver, skeletal muscle, kidney or peripheral blood leukocytes.

It is found in the membrane. Its function is as follows. Cell adhesion leukocyte receptor expressed by mucosal venules, helps to direct lymphocyte traffic into mucosal tissues including the Peyer patches and the intestinal lamina propria. It can bind both integrin alpha-4/beta-7 and L-selectin, regulating both the passage and retention of leukocytes. Isoform 2, lacking the mucin-like domain, may be specialized in supporting integrin alpha-4/beta-7-dependent adhesion strengthening, independent of L-selectin binding. In Homo sapiens (Human), this protein is Mucosal addressin cell adhesion molecule 1 (MADCAM1).